Reading from the N-terminus, the 92-residue chain is Small ribosomal subunit protein uS19 (92 aa).

It belongs to the universal ribosomal protein uS19 family.

Functionally, protein S19 forms a complex with S13 that binds strongly to the 16S ribosomal RNA. In Wigglesworthia glossinidia brevipalpis, this protein is Small ribosomal subunit protein uS19.